Consider the following 470-residue polypeptide: Cysteine--tRNA ligase (470 aa).

Position 30 (C30) interacts with Zn(2+). Positions 32 to 42 (PTVYNYIHIGN) match the 'HIGH' region motif. Positions 211, 236, and 240 each coordinate Zn(2+). The short motif at 268 to 272 (KMSKS) is the 'KMSKS' region element. K271 serves as a coordination point for ATP.

The protein belongs to the class-I aminoacyl-tRNA synthetase family. Monomer. Zn(2+) serves as cofactor.

Its subcellular location is the cytoplasm. It carries out the reaction tRNA(Cys) + L-cysteine + ATP = L-cysteinyl-tRNA(Cys) + AMP + diphosphate. The protein is Cysteine--tRNA ligase of Fervidobacterium nodosum (strain ATCC 35602 / DSM 5306 / Rt17-B1).